The primary structure comprises 240 residues: Orotidine 5'-phosphate decarboxylase (240 aa).

Substrate is bound by residues Asp16, Lys37, 64–73 (DLKFHDIPTT), Thr128, Arg190, Gln199, Gly219, and Arg220. The active-site Proton donor is the Lys66.

It belongs to the OMP decarboxylase family. Type 1 subfamily. In terms of assembly, homodimer.

The catalysed reaction is orotidine 5'-phosphate + H(+) = UMP + CO2. It functions in the pathway pyrimidine metabolism; UMP biosynthesis via de novo pathway; UMP from orotate: step 2/2. Catalyzes the decarboxylation of orotidine 5'-monophosphate (OMP) to uridine 5'-monophosphate (UMP). The polypeptide is Orotidine 5'-phosphate decarboxylase (Prochlorococcus marinus (strain SARG / CCMP1375 / SS120)).